The chain runs to 409 residues: MRQEVHDAARRARVAARALAVMPTVAKDHALRAAATAVTAHTEEILAANAEDLQAARATDTLAATLDRLALDRQRIDQIAGGLRQVAALPDPIGEVLRGYTLPNGLQLRQQRVPLGVVGMIYEGRPNITVDAFGLAFKSGNAALLRGSSSAAKSNQALVEVLHAALVSEDLPADAVQLLSAADRSTVTHLIQARGLVDVVIPRGGANLIDAVVRDAQVPIIETGVGNCHVYVHQAADLEVAERILLNSKTRRPSVCNAAETLLIDAAIADHTMPRLVAALQGAGVTVHGGLSGDPDKADLCREYLSMDIAVAVVDGVDAAIAHINEYGTGHTEAIVTTNMAAAQRFADGVDSATVMVNASTAFTDGGQFGFGAEIGISTQKLHARGPMGLSEMTSTKWIVWGDGQIRPA.

Belongs to the gamma-glutamyl phosphate reductase family.

The protein localises to the cytoplasm. The catalysed reaction is L-glutamate 5-semialdehyde + phosphate + NADP(+) = L-glutamyl 5-phosphate + NADPH + H(+). It participates in amino-acid biosynthesis; L-proline biosynthesis; L-glutamate 5-semialdehyde from L-glutamate: step 2/2. Catalyzes the NADPH-dependent reduction of L-glutamate 5-phosphate into L-glutamate 5-semialdehyde and phosphate. The product spontaneously undergoes cyclization to form 1-pyrroline-5-carboxylate. In Mycobacterium leprae (strain TN), this protein is Gamma-glutamyl phosphate reductase.